The following is a 120-amino-acid chain: Large ribosomal subunit protein bL17 (120 aa).

It belongs to the bacterial ribosomal protein bL17 family. As to quaternary structure, part of the 50S ribosomal subunit. Contacts protein L32.

In Bacillus licheniformis (strain ATCC 14580 / DSM 13 / JCM 2505 / CCUG 7422 / NBRC 12200 / NCIMB 9375 / NCTC 10341 / NRRL NRS-1264 / Gibson 46), this protein is Large ribosomal subunit protein bL17.